A 122-amino-acid polypeptide reads, in one-letter code: Large ribosomal subunit protein uL14 (122 aa).

This sequence belongs to the universal ribosomal protein uL14 family. In terms of assembly, part of the 50S ribosomal subunit. Forms a cluster with proteins L3 and L19. In the 70S ribosome, L14 and L19 interact and together make contacts with the 16S rRNA in bridges B5 and B8.

Binds to 23S rRNA. Forms part of two intersubunit bridges in the 70S ribosome. This is Large ribosomal subunit protein uL14 from Rickettsia typhi (strain ATCC VR-144 / Wilmington).